A 147-amino-acid polypeptide reads, in one-letter code: uncharacterized protein (147 aa).

It to M.jannaschii MJ0215.

This is an uncharacterized protein from Methanocaldococcus jannaschii (strain ATCC 43067 / DSM 2661 / JAL-1 / JCM 10045 / NBRC 100440) (Methanococcus jannaschii).